The sequence spans 307 residues: Pyridoxal 5'-phosphate synthase subunit PdxS (307 aa).

Over residues 1–10 (MRGQPRPKLR) the composition is skewed to basic residues. The disordered stretch occupies residues 1 to 20 (MRGQPRPKLRRMTEQQTGTP). Aspartate 37 is a D-ribose 5-phosphate binding site. Residue lysine 94 is the Schiff-base intermediate with D-ribose 5-phosphate of the active site. Position 166 (glycine 166) interacts with D-ribose 5-phosphate. Arginine 178 is a binding site for D-glyceraldehyde 3-phosphate. D-ribose 5-phosphate contacts are provided by residues glycine 227 and 248 to 249 (GS).

The protein belongs to the PdxS/SNZ family. In terms of assembly, in the presence of PdxT, forms a dodecamer of heterodimers.

The enzyme catalyses aldehydo-D-ribose 5-phosphate + D-glyceraldehyde 3-phosphate + L-glutamine = pyridoxal 5'-phosphate + L-glutamate + phosphate + 3 H2O + H(+). It functions in the pathway cofactor biosynthesis; pyridoxal 5'-phosphate biosynthesis. Catalyzes the formation of pyridoxal 5'-phosphate from ribose 5-phosphate (RBP), glyceraldehyde 3-phosphate (G3P) and ammonia. The ammonia is provided by the PdxT subunit. Can also use ribulose 5-phosphate and dihydroxyacetone phosphate as substrates, resulting from enzyme-catalyzed isomerization of RBP and G3P, respectively. The protein is Pyridoxal 5'-phosphate synthase subunit PdxS of Deinococcus radiodurans (strain ATCC 13939 / DSM 20539 / JCM 16871 / CCUG 27074 / LMG 4051 / NBRC 15346 / NCIMB 9279 / VKM B-1422 / R1).